The chain runs to 786 residues: Endonuclease MutS2 (786 aa).

Position 332–339 (332–339 (GPNTGGKT)) interacts with ATP. In terms of domain architecture, Smr spans 711–786 (IDLRGMDSEE…GTGVTVVILK (76 aa)).

It belongs to the DNA mismatch repair MutS family. MutS2 subfamily. In terms of assembly, homodimer. Binds to stalled ribosomes, contacting rRNA.

Functionally, endonuclease that is involved in the suppression of homologous recombination and thus may have a key role in the control of bacterial genetic diversity. Acts as a ribosome collision sensor, splitting the ribosome into its 2 subunits. Detects stalled/collided 70S ribosomes which it binds and splits by an ATP-hydrolysis driven conformational change. Acts upstream of the ribosome quality control system (RQC), a ribosome-associated complex that mediates the extraction of incompletely synthesized nascent chains from stalled ribosomes and their subsequent degradation. Probably generates substrates for RQC. This Clostridium perfringens (strain 13 / Type A) protein is Endonuclease MutS2.